Here is a 273-residue protein sequence, read N- to C-terminus: Fos-related antigen 1 (273 aa).

Disordered stretches follow at residues 1–46 (MYRD…IDSS) and 60–114 (GPTG…RRER). The segment covering 7-35 (EPGPSSGAGSPYGRPAQPPQAQAQTAQQQ) has biased composition (low complexity). The bZIP domain occupies 105–168 (EERRRVRRER…ERLELVLEAH (64 aa)). The interval 107–127 (RRRVRRERNKLAAAKCRNRRK) is basic motif. A leucine-zipper region spans residues 133–161 (LQAETDKLEDEKSGLQREIEELQKQKERL). The segment covering 169-182 (RPICKIPEGDKKDP) has biased composition (basic and acidic residues). Residues 169–273 (RPICKIPEGD…PLGSPTLLAL (105 aa)) are disordered. 2 stretches are compositionally biased toward low complexity: residues 217–235 (LHTP…TPSL) and 254–273 (SSSS…LLAL). Phosphoserine is present on serine 267.

The protein belongs to the bZIP family. Fos subfamily. As to quaternary structure, heterodimer. Interacts with the BAF multiprotein chromatin-remodeling complex subunits SMARCB1 and SMARCD1. Interacts with ARID1A and JUN.

It localises to the nucleus. The protein is Fos-related antigen 1 (Fosl1) of Mus musculus (Mouse).